Consider the following 555-residue polypeptide: Formate--tetrahydrofolate ligase (555 aa).

64–71 (TKAGIGKT) contributes to the ATP binding site.

Belongs to the formate--tetrahydrofolate ligase family.

The enzyme catalyses (6S)-5,6,7,8-tetrahydrofolate + formate + ATP = (6R)-10-formyltetrahydrofolate + ADP + phosphate. The protein operates within one-carbon metabolism; tetrahydrofolate interconversion. This chain is Formate--tetrahydrofolate ligase, found in Bacteroides fragilis (strain ATCC 25285 / DSM 2151 / CCUG 4856 / JCM 11019 / LMG 10263 / NCTC 9343 / Onslow / VPI 2553 / EN-2).